Consider the following 109-residue polypeptide: U26-theraphotoxin-Cg1a (109 aa).

The first 18 residues, 1 to 18, serve as a signal peptide directing secretion; that stretch reads MNTIIPLLLLSLLITVYA. The propeptide occupies 19–67; that stretch reads YALEDGNKEEIQDIAESEFEASNEMLQLAHLLEADRAETEEDRNSRQKR. 3 disulfide bridges follow: C68–C83, C75–C88, and C82–C103.

Belongs to the neurotoxin 14 (magi-1) family. 07 (Jztx-56) subfamily. Expressed by the venom gland.

The protein resides in the secreted. Functionally, probable ion channel inhibitor. In Chilobrachys guangxiensis (Chinese earth tiger tarantula), this protein is U26-theraphotoxin-Cg1a.